Consider the following 64-residue polypeptide: Toxin BmKIT3 (64 aa).

The 61-residue stretch at 1–61 (DGYIRGSNGC…TWKSESNTCG (61 aa)) folds into the LCN-type CS-alpha/beta domain. 4 disulfides stabilise this stretch: Cys10/Cys60, Cys14/Cys35, Cys21/Cys42, and Cys25/Cys44. A Cysteine amide modification is found at Cys60.

The protein belongs to the long (4 C-C) scorpion toxin superfamily. Sodium channel inhibitor family. Beta subfamily. Expressed by the venom gland.

The protein localises to the secreted. Depressant insect beta-toxins cause a transient contraction paralysis followed by a slow flaccid paralysis. They bind voltage-independently at site-4 of sodium channels (Nav) and shift the voltage of activation toward more negative potentials thereby affecting sodium channel activation and promoting spontaneous and repetitive firing. This is Toxin BmKIT3 from Olivierus martensii (Manchurian scorpion).